Here is a 205-residue protein sequence, read N- to C-terminus: MIPLSHNNTPTELENYVKLKGQSLTIQDFSAHDFQGVKKIVRDRLHTLQGELCVYCEKKYSVDEMQVEHIKPKSGRNAQPNLCFTYSNYAVSCIQENRKTQTCGQKKKDNILFIEPTSPSCNSHFSLDTDGFINPRGFKNRKEKHSIQTTIDMLGLNKPHLQLERKKQIERLIYILKATKHNRHELTNKFIKSGNFKYILRELTM.

Putative HNH endonuclease component of antiviral defense system retron Vc95, composed of a non-coding RNA (ncRNA), a reverse transcriptase (RT), a probable ATP-binding protein and this protein. Expression of retron Vc95 confers protection against bacteriophages T2, T4 and T6. At multiplicity of infection (MOI) of 0.02 cultures slow growth when infected with T4 but do not collapse, at MOI 2 cultures enter growth stasis. The chain is Retron Vc95 putative HNH endonuclease from Vibrio cholerae serotype O1 biovar El Tor.